Consider the following 927-residue polypeptide: Autophagy-related protein 13 (927 aa).

Disordered regions lie at residues 1 to 66 (MHQQ…PPAD), 334 to 359 (SLPQ…RSKP), 388 to 559 (LRSV…AQPG), 628 to 716 (TESM…TIRE), and 786 to 927 (QMQL…RRGW). The span at 14–30 (PGATTQPNLPSRSNSTR) shows a compositional bias: polar residues. Composition is skewed to polar residues over residues 393–402 (QPGSDTSSPP), 513–523 (PASTSRYSSSF), and 544–557 (GSSG…SVAQ). Positions 630–671 (SMTSSVQMQRSSSSSSRQLTSVPGMTAPASVSASSSPGKPLS) are enriched in low complexity. A compositionally biased stretch (polar residues) spans 684 to 716 (LSENSIIDYSGQGRITSRQGRTSDNTQPGTIRE). Over residues 793–803 (STQRPSDRLEP) the composition is skewed to basic and acidic residues. The span at 850-868 (HKQTPPQSSRGSFNGSLNR) shows a compositional bias: polar residues. The segment covering 891–901 (PQGRRSIEEAR) has biased composition (basic and acidic residues).

This sequence belongs to the ATG13 family. Fungi subfamily. As to quaternary structure, hypophosphorylated form interacts with ATG1 to form the ATG1-ATG13 kinase complex. The ATG1-ATG13 complex interacts with the ATG17-ATG29-ATG31 complex through direct interaction with ATG17.

The protein localises to the cytoplasm. It localises to the preautophagosomal structure. Functionally, activates the ATG1 kinase in a nutritional condition dependent manner through the TOR pathway, leading to autophagy. Involved in ATG9 and ATG23 cycling through the pre-autophagosomal structure. Also involved in cytoplasm to vacuole transport (Cvt) and more specifically in Cvt vesicle formation. Seems to play a role in the switching machinery regulating the conversion between the Cvt pathway and autophagy. Finally, ATG13 is also required for glycogen storage during stationary phase. Autophagy is required for proper vegetative growth, asexual/sexual reproduction, and full virulence. Autophagy is particularly involved in the biosynthesis of deoxynivalenol (DON), an important virulence determinant. The chain is Autophagy-related protein 13 from Gibberella zeae (strain ATCC MYA-4620 / CBS 123657 / FGSC 9075 / NRRL 31084 / PH-1) (Wheat head blight fungus).